Consider the following 319-residue polypeptide: Beta-ketoacyl-[acyl-carrier-protein] synthase III (319 aa).

Active-site residues include Cys113 and His246. The interval 247-251 (QANIR) is ACP-binding. Asn276 is an active-site residue.

It belongs to the thiolase-like superfamily. FabH family. Homodimer.

It localises to the cytoplasm. It catalyses the reaction malonyl-[ACP] + acetyl-CoA + H(+) = 3-oxobutanoyl-[ACP] + CO2 + CoA. Its pathway is lipid metabolism; fatty acid biosynthesis. Its function is as follows. Catalyzes the condensation reaction of fatty acid synthesis by the addition to an acyl acceptor of two carbons from malonyl-ACP. Catalyzes the first condensation reaction which initiates fatty acid synthesis and may therefore play a role in governing the total rate of fatty acid production. Possesses both acetoacetyl-ACP synthase and acetyl transacylase activities. Its substrate specificity determines the biosynthesis of branched-chain and/or straight-chain of fatty acids. The chain is Beta-ketoacyl-[acyl-carrier-protein] synthase III from Ehrlichia canis (strain Jake).